Here is an 88-residue protein sequence, read N- to C-terminus: Large ribosomal subunit protein bL27 (88 aa).

Residues 1 to 21 (MAHKKGQGSTQNNRDSAGRRL) form a disordered region.

It belongs to the bacterial ribosomal protein bL27 family.

This Helicobacter pylori (strain J99 / ATCC 700824) (Campylobacter pylori J99) protein is Large ribosomal subunit protein bL27.